The following is a 758-amino-acid chain: Spastin (758 aa).

A disordered region spans residues 1-103 (MVRTKNQSSS…SPRSGHHHSY (103 aa)). Over 1–121 (MVRTKNQSSS…KQNLYVVSFP (121 aa)) the chain is Cytoplasmic. Positions 1-159 (MVRTKNQSSS…VIYRPHRRDC (159 aa)) are interaction with atl. The required for localization to punctate cytoplasmic foci stretch occupies residues 1-210 (MVRTKNQSSS…RPIQPLEMAA (210 aa)). Composition is skewed to low complexity over residues 8–28 (SSSS…SSGA), 43–58 (RSSS…AGGS), 66–76 (SSNRRSPGSSP), and 85–95 (TDDLTPTTCSP). The helical intramembrane region spans 122–142 (IIFLFNVLRSLIYQLFCIFRY). At 143-758 (LYGASTKVIY…WSQDYGDITI (616 aa)) the chain is on the cytoplasmic side. Polar residues-rich tracts occupy residues 169–180 (SKEQQQSLNHPS) and 189–198 (QEQQLSNQPQ). The disordered stretch occupies residues 169–202 (SKEQQQSLNHPSELNREGDGQEQQLSNQPQRFRP). The sufficient for interaction with microtubules and microtubule severing stretch occupies residues 208-758 (MAANRPGGGY…WSQDYGDITI (551 aa)). The 76-residue stretch at 233-308 (HRRAFEYISK…SMARDRLHFL (76 aa)) folds into the MIT domain. The tract at residues 353 to 454 (RVRSSGYGPK…GPSGSGASTP (102 aa)) is disordered. Polar residues-rich tracts occupy residues 390-406 (NKSQ…TSVG) and 425-454 (QFSS…ASTP). Phosphothreonine is present on T439. A required for interaction with microtubules region spans residues 443–455 (NNGPSGSGASTPV). 523–530 (GPPGNGKT) serves as a coordination point for ATP.

The protein belongs to the AAA ATPase family. Spastin subfamily. Homohexamer. The homohexamer is stabilized by ATP-binding. The homohexamer may adopt a ring conformation through which microtubules pass prior to being severed. Interacts with microtubules. Interacts with atl; may be involved in microtubule dynamics.

Its subcellular location is the membrane. The protein localises to the cytoplasm. It is found in the cytoskeleton. The protein resides in the microtubule organizing center. It localises to the centrosome. Its subcellular location is the chromosome. The protein localises to the lipid droplet. It carries out the reaction n ATP + n H2O + a microtubule = n ADP + n phosphate + (n+1) alpha/beta tubulin heterodimers.. Functionally, ATP-dependent microtubule severing protein. Stimulates microtubule minus-end depolymerization and poleward microtubule flux in the mitotic spindle. Regulates microtubule stability in the neuromuscular junction synapse. Involved in lipid metabolism by regulating the size and distribution of lipid droplets. Involved in axon regeneration by regulating microtubule severing. The polypeptide is Spastin (Drosophila melanogaster (Fruit fly)).